A 440-amino-acid polypeptide reads, in one-letter code: L-seryl-tRNA(Sec) selenium transferase (440 aa).

N6-(pyridoxal phosphate)lysine is present on Lys282.

The protein belongs to the SelA family. It depends on pyridoxal 5'-phosphate as a cofactor.

Its subcellular location is the cytoplasm. It carries out the reaction L-seryl-tRNA(Sec) + selenophosphate + H(+) = L-selenocysteinyl-tRNA(Sec) + phosphate. It functions in the pathway aminoacyl-tRNA biosynthesis; selenocysteinyl-tRNA(Sec) biosynthesis; selenocysteinyl-tRNA(Sec) from L-seryl-tRNA(Sec) (bacterial route): step 1/1. Functionally, converts seryl-tRNA(Sec) to selenocysteinyl-tRNA(Sec) required for selenoprotein biosynthesis. In Campylobacter jejuni subsp. jejuni serotype O:2 (strain ATCC 700819 / NCTC 11168), this protein is L-seryl-tRNA(Sec) selenium transferase.